Reading from the N-terminus, the 20-residue chain is Brevinin-1DYa (20 aa).

Cys14 and Cys20 are joined by a disulfide.

As to expression, expressed by the skin glands.

It localises to the secreted. Its function is as follows. Antimicrobial peptide. Has low activity against the Gram-positive bacterium S.aureus and the Gram-negative bacterium E.coli (MIC&lt;15 uM). Has a strong hemolytic activity. In Rana dybowskii (Dybovsky's frog), this protein is Brevinin-1DYa.